The following is a 613-amino-acid chain: Thioredoxin reductase 1, cytoplasmic (613 aa).

A disordered region spans residues 58-121 (AVLPASRPSK…LPTMNGSKDP (64 aa)). Over residues 65–74 (PSKTLPSSSQ) the composition is skewed to polar residues. FAD is bound by residues 136-137 (SG), 156-157 (DF), 172-173 (TC), and 177-181 (GCIPK). Residues cysteine 173 and cysteine 178 are joined by a disulfide bond. Lysine 182 is modified (N6-succinyllysine). Residue tyrosine 245 is modified to Phosphotyrosine. FAD-binding positions include 245-246 (YG) and threonine 275. Residues arginine 280, 312–318 (ASYVALE), 335–336 (RS), arginine 340, 340–342 (RGF), 406–407 (GR), and lysine 429 each bind NADP(+). Tyrosine 314 is an FAD binding site. Residues aspartate 448, 455 to 457 (ELT), and histidine 586 each bind FAD. NADP(+) is bound at residue glutamate 455. The active-site Proton acceptor is the histidine 586. The cysteinyl-selenocysteine (Cys-Sec) cross-link spans 611–612 (CU). Position 612 (selenocysteine 612) is a non-standard amino acid, selenocysteine.

This sequence belongs to the class-I pyridine nucleotide-disulfide oxidoreductase family. Homodimer. FAD serves as cofactor. Post-translationally, ISGylated.

It is found in the cytoplasm. It carries out the reaction [thioredoxin]-dithiol + NADP(+) = [thioredoxin]-disulfide + NADPH + H(+). The enzyme catalyses H2O2 + NADPH + H(+) = NADP(+) + 2 H2O. Functionally, reduces disulfideprotein thioredoxin (Trx) to its dithiol-containing form. Homodimeric flavoprotein involved in the regulation of cellular redox reactions, growth and differentiation. Contains a selenocysteine residue at the C-terminal active site that is essential for catalysis. Also has reductase activity on hydrogen peroxide (H2O2). This is Thioredoxin reductase 1, cytoplasmic from Mus musculus (Mouse).